The following is an 808-amino-acid chain: Digalactosyldiacylglycerol synthase 1, chloroplastic (808 aa).

The disordered stretch occupies residues 1-23 (MVKETLIPPSSTSMTTGTSSSSS). A chloroplast-targeting transit peptide spans 1–58 (MVKETLIPPSSTSMTTGTSSSSSLSMTLSSTNALSFLSKGWREVWDSADADLQLMRDR). Residues 10-23 (SSTSMTTGTSSSSS) show a composition bias toward low complexity.

It belongs to the glycosyltransferase group 1 family. Glycosyltransferase 4 subfamily.

It localises to the plastid. The protein resides in the chloroplast outer membrane. It catalyses the reaction a 1,2-diacyl-3-O-(beta-D-galactosyl)-sn-glycerol + UDP-alpha-D-galactose = a 1,2-diacyl-3-O-[alpha-D-galactosyl-(1-&gt;6)-beta-D-galactosyl]-sn-glycerol + UDP + H(+). Its function is as follows. Involved in the synthesis of diacylglycerol galactolipids that are specifically found in thylakoid membranes. Specific for alpha-glycosidic linkages. Responsible for the final assembly of galactolipids in photosynthetic membranes. Digalactosyldiacylglycerol (DGDG) provides stability to the photosystem I (PSI) complex, especially to the PsaA, PsaB, PsaC, PsaL and PsaH subunits. The protein is Digalactosyldiacylglycerol synthase 1, chloroplastic of Arabidopsis thaliana (Mouse-ear cress).